We begin with the raw amino-acid sequence, 185 residues long: Ribosome-recycling factor (185 aa).

It belongs to the RRF family.

The protein localises to the cytoplasm. In terms of biological role, responsible for the release of ribosomes from messenger RNA at the termination of protein biosynthesis. May increase the efficiency of translation by recycling ribosomes from one round of translation to another. The protein is Ribosome-recycling factor of Geobacter metallireducens (strain ATCC 53774 / DSM 7210 / GS-15).